The following is a 413-amino-acid chain: Multifunctional CCA protein (413 aa).

G8 and R11 together coordinate ATP. G8 and R11 together coordinate CTP. Mg(2+) is bound by residues D21 and D23. ATP contacts are provided by R91, R143, and R146. CTP contacts are provided by R91, R143, and R146. In terms of domain architecture, HD spans 232 to 333; sequence TGVHVMMVVD…VRLFERSDAL (102 aa).

It belongs to the tRNA nucleotidyltransferase/poly(A) polymerase family. Bacterial CCA-adding enzyme type 1 subfamily. Monomer. Can also form homodimers and oligomers. Requires Mg(2+) as cofactor. The cofactor is Ni(2+).

The catalysed reaction is a tRNA precursor + 2 CTP + ATP = a tRNA with a 3' CCA end + 3 diphosphate. It carries out the reaction a tRNA with a 3' CCA end + 2 CTP + ATP = a tRNA with a 3' CCACCA end + 3 diphosphate. In terms of biological role, catalyzes the addition and repair of the essential 3'-terminal CCA sequence in tRNAs without using a nucleic acid template. Adds these three nucleotides in the order of C, C, and A to the tRNA nucleotide-73, using CTP and ATP as substrates and producing inorganic pyrophosphate. tRNA 3'-terminal CCA addition is required both for tRNA processing and repair. Also involved in tRNA surveillance by mediating tandem CCA addition to generate a CCACCA at the 3' terminus of unstable tRNAs. While stable tRNAs receive only 3'-terminal CCA, unstable tRNAs are marked with CCACCA and rapidly degraded. This chain is Multifunctional CCA protein, found in Burkholderia orbicola (strain MC0-3).